The following is a 224-amino-acid chain: Transposase for insertion sequence element IS257 in transposon Tn4003 (224 aa).

The H-T-H motif DNA-binding region spans 33-52 (EILRGRGVNVHHSTVYRWVQ). An Integrase catalytic domain is found at 73 to 222 (WRIDETYIKI…SPCHEISIML (150 aa)).

Involved in the transposition of the insertion sequence. The chain is Transposase for insertion sequence element IS257 in transposon Tn4003 from Staphylococcus aureus.